The following is a 260-amino-acid chain: Hydroxyacylglutathione hydrolase (260 aa).

Zn(2+) contacts are provided by H61, H63, D65, H66, H119, D138, and H176.

It belongs to the metallo-beta-lactamase superfamily. Glyoxalase II family. In terms of assembly, monomer. Requires Zn(2+) as cofactor.

The catalysed reaction is an S-(2-hydroxyacyl)glutathione + H2O = a 2-hydroxy carboxylate + glutathione + H(+). It functions in the pathway secondary metabolite metabolism; methylglyoxal degradation; (R)-lactate from methylglyoxal: step 2/2. In terms of biological role, thiolesterase that catalyzes the hydrolysis of S-D-lactoyl-glutathione to form glutathione and D-lactic acid. The sequence is that of Hydroxyacylglutathione hydrolase from Brucella suis (strain ATCC 23445 / NCTC 10510).